We begin with the raw amino-acid sequence, 426 residues long: Putative FBD-associated F-box protein At5g53635 (426 aa).

One can recognise an F-box domain in the interval 1 to 45 (MISQLPDPLICHILSHLPIKDLVTTRVLSTRWRSLWLWLPCLELN). The FBD domain occupies 353 to 405 (MIQFGSSLVPECLLSSLEFVDIRIPFRGHLEVMKLVRYFLENSAILKKLSLDH).

The protein is Putative FBD-associated F-box protein At5g53635 of Arabidopsis thaliana (Mouse-ear cress).